The sequence spans 466 residues: 3-isopropylmalate dehydratase large subunit (466 aa).

Residues Cys-345, Cys-405, and Cys-408 each coordinate [4Fe-4S] cluster.

It belongs to the aconitase/IPM isomerase family. LeuC type 1 subfamily. Heterodimer of LeuC and LeuD. [4Fe-4S] cluster is required as a cofactor.

It carries out the reaction (2R,3S)-3-isopropylmalate = (2S)-2-isopropylmalate. Its pathway is amino-acid biosynthesis; L-leucine biosynthesis; L-leucine from 3-methyl-2-oxobutanoate: step 2/4. In terms of biological role, catalyzes the isomerization between 2-isopropylmalate and 3-isopropylmalate, via the formation of 2-isopropylmaleate. The sequence is that of 3-isopropylmalate dehydratase large subunit from Microcystis aeruginosa (strain NIES-843 / IAM M-2473).